Consider the following 220-residue polypeptide: Cysteine-rich venom protein VAR5 (220 aa).

Residues 1–22 (MILLKLYLTLAAILCQSRGTTS) form the signal peptide. The SCP domain maps to 41-169 (NKHNDLRRTV…PLKYFLVCQY (129 aa)). 5 disulfides stabilise this stretch: Cys-77–Cys-156, Cys-95–Cys-170, Cys-151–Cys-167, Cys-189–Cys-196, and Cys-192–Cys-201. Residues 205 to 220 (CEHSNQYINCPDLTKQ) form the ShKT domain.

The protein belongs to the CRISP family. Post-translationally, contains 8 disulfide bonds. As to expression, expressed by the venom gland.

The protein localises to the secreted. In terms of biological role, blocks ryanodine receptors, and potassium channels. The chain is Cysteine-rich venom protein VAR5 from Varanus acanthurus (Ridge-tailed monitor).